We begin with the raw amino-acid sequence, 536 residues long: E3 ubiquitin-protein ligase Godzilla (536 aa).

The N-terminal stretch at 1-21 (MSKRSCQILTLLGLCLVCHEA) is a signal peptide. The Extracellular portion of the chain corresponds to 22–174 (TLVGGHVLVY…DELPFNINTQ (153 aa)). Residues 89–151 (FVALVARGEC…FVGHTTGKAL (63 aa)) enclose the PA domain. N-linked (GlcNAc...) asparagine glycosylation is found at asparagine 109 and asparagine 132. The helical transmembrane segment at 175–195 (LILPFSILIGMCFIIMVIYMI) threads the bilayer. The Cytoplasmic portion of the chain corresponds to 196–536 (YKCIREQRRL…HSASDRQFLI (341 aa)). An RING-type; atypical zinc finger spans residues 235 to 277 (CVICLEDFIEDDKLRVLPCSHPYHTHCIDPWLTENRRVCPICK). 2 disordered regions span residues 287–334 (RASR…GAAG) and 350–372 (HGTF…SDDE). Positions 307 to 334 (TPLLQQQQSNGRQVGQVSSASSAGGAAG) are enriched in low complexity.

Belongs to the Godzilla family.

The protein localises to the endosome membrane. The enzyme catalyses S-ubiquitinyl-[E2 ubiquitin-conjugating enzyme]-L-cysteine + [acceptor protein]-L-lysine = [E2 ubiquitin-conjugating enzyme]-L-cysteine + N(6)-ubiquitinyl-[acceptor protein]-L-lysine.. The protein operates within protein modification; protein ubiquitination. Endosomal E3 ubiquitin-protein ligase that regulates the recycling endosome pathway by mediating ubiquitination of Synaptobrevin (Syb). Also acts as a regulator of transcytosis in wing imaginal disks by catalyzing ubiquitination of Syb: ubiquitination of Syb promotes transcytosis of wingless (wg) to the basolateral surface. The sequence is that of E3 ubiquitin-protein ligase Godzilla from Drosophila melanogaster (Fruit fly).